The sequence spans 506 residues: MEPARPAPGRLRPLLCLLLAASNAWTGTAGDGELQVIQPERSVSVAAGETATLHCTVTSLSPVGPIKWFKGTGPGREFIYSQKEAPFPRVTNVSDATKRNNMDFSIRISNITPADAGVYYCVKFRKEERGDMEFKSGPGTHLTVSAKPSPPVLSGPTVRATPEQTVNFTCTSHGFSPRNISLKWFKNGNELSASQTSVDPEDNNVSYSINSTTKVLLATGDVHSQVICEVAHVTLQGGPPLRGTANLSETIRVPPTLEITGSPSAGNQVNVTCQVNKFYPRHLQLTWLENGNMSRTEAASVFVENKDGTFNQTSWFLVNSSAHREAVVLTCQVEHDGQPAVSKNHTLEVSAPQKDQDTGQTPGPNDSNWTSIFIVVGVVCALLVALLIAALYLLRIRQNKAKGSTSSTRLHEPEKNTRETTQIQDNNDITYADLNLPKGKKSTPKANEPNNHTEYASIQARPPPVSEDTLTYADLDMVHLNRTPKQPAPKPEPSYSEYASVQVQRK.

Positions 1–29 are cleaved as a signal peptide; the sequence is MEPARPAPGRLRPLLCLLLAASNAWTGTA. Positions 30 to 145 constitute an Ig-like V-type domain; sequence GDGELQVIQP…SGPGTHLTVS (116 aa). At 30-371 the chain is on the extracellular side; it reads GDGELQVIQP…PGPNDSNWTS (342 aa). Residues cysteine 55 and cysteine 121 are joined by a disulfide bond. The N-linked (GlcNAc...) asparagine glycan is linked to asparagine 92. A disordered region spans residues 136–159; that stretch reads SGPGTHLTVSAKPSPPVLSGPTVR. 2 consecutive Ig-like C1-type domains span residues 148-248 and 255-348; these read PSPP…ANLS and PTLE…HTLE. 12 N-linked (GlcNAc...) asparagine glycosylation sites follow: asparagine 167, asparagine 179, asparagine 204, asparagine 210, asparagine 246, asparagine 270, asparagine 292, asparagine 311, asparagine 319, asparagine 344, asparagine 365, and asparagine 368. Cysteine 170 and cysteine 228 form a disulfide bridge. Cysteines 273 and 331 form a disulfide. Residues 344–364 are disordered; sequence NHTLEVSAPQKDQDTGQTPGP. The chain crosses the membrane as a helical span at residues 372 to 392; that stretch reads IFIVVGVVCALLVALLIAALY. Topologically, residues 393-506 are cytoplasmic; it reads LLRIRQNKAK…EYASVQVQRK (114 aa). The disordered stretch occupies residues 402 to 468; it reads KGSTSSTRLH…QARPPPVSED (67 aa). Positions 409–418 are enriched in basic and acidic residues; the sequence is RLHEPEKNTR. Residues 419 to 429 show a composition bias toward polar residues; it reads ETTQIQDNNDI. Phosphotyrosine; by Tyr-kinases is present on tyrosine 431. The SH2-binding motif lies at 432 to 435; it reads ADLN. Positions 441–446 match the SH3-binding motif; the sequence is KSTPKA. A compositionally biased stretch (polar residues) spans 444–456; it reads PKANEPNNHTEYA. Phosphotyrosine; by Tyr-kinases occurs at positions 455, 472, and 498. Short sequence motifs (SH2-binding) lie at residues 455–458, 472–475, and 498–501; these read YASI, YADL, and YASV. Residues 480–506 are disordered; that stretch reads LNRTPKQPAPKPEPSYSEYASVQVQRK. Over residues 497-506 the composition is skewed to polar residues; the sequence is EYASVQVQRK.

As to quaternary structure, binds PTPN11 when tyrosine-phosphorylated, except in macrophages, where it primarily binds PTPN6. Binds GRB2 in vitro. Binds JAK2 irrespective of its phosphorylation status and forms a stable complex. Binds SCAP1 and/or SCAP2. The resulting complex recruits FYB1. Binds FGR and PTK2B. Interacts with TRIM2. In terms of processing, phosphorylated on tyrosine residues. Highly expressed in spleen macrophages. Detected in skin dendritic cells.

Its subcellular location is the membrane. In terms of biological role, immunoglobulin-like cell surface receptor for CD47. Acts as docking protein and induces translocation of PTPN6, PTPN11 and other binding partners from the cytosol to the plasma membrane. Supports adhesion of cerebellar neurons, neurite outgrowth and glial cell attachment. May play a key role in intracellular signaling during synaptogenesis and in synaptic function. Involved in the negative regulation of receptor tyrosine kinase-coupled cellular responses induced by cell adhesion, growth factors or insulin. Mediates negative regulation of phagocytosis, mast cell activation and dendritic cell activation. CD47 binding prevents maturation of immature dendritic cells and inhibits cytokine production by mature dendritic cells. Plays a role in antiviral immunity and limits new world arenavirus infection by decreasing virus internalization. Receptor for THBS1. Interaction with THBS1 stimulates phosphorylation of SIRPA. In response to THBS1, involved in ROS signaling in non-phagocytic cells, stimulating NADPH oxidase-derived ROS production. This chain is Tyrosine-protein phosphatase non-receptor type substrate 1 (SIRPA), found in Bos taurus (Bovine).